We begin with the raw amino-acid sequence, 165 residues long: MNSLKNLILIGVIKSCHGIQGHVILKSFTEPSTKILERTLVNESGANIRIKLISQNAKGELICTFNDIATRNEAENLKGYKIFCLRTSLPKLEEDEFYIADLNHLQILDQSNKEIGKIKNILNFGAGDIIEIEFLDKTTELLPFNKEFFPIITKDYVILNYQTKV.

Positions 94–165 (EDEFYIADLN…YVILNYQTKV (72 aa)) constitute a PRC barrel domain.

The protein belongs to the RimM family. Binds ribosomal protein uS19.

It localises to the cytoplasm. An accessory protein needed during the final step in the assembly of 30S ribosomal subunit, possibly for assembly of the head region. Essential for efficient processing of 16S rRNA. May be needed both before and after RbfA during the maturation of 16S rRNA. It has affinity for free ribosomal 30S subunits but not for 70S ribosomes. The protein is Ribosome maturation factor RimM of Rickettsia prowazekii (strain Madrid E).